Reading from the N-terminus, the 421-residue chain is Serine hydroxymethyltransferase (421 aa).

(6S)-5,6,7,8-tetrahydrofolate contacts are provided by residues L123 and 127–129; that span reads GHL. K232 carries the post-translational modification N6-(pyridoxal phosphate)lysine.

This sequence belongs to the SHMT family. As to quaternary structure, homodimer. Pyridoxal 5'-phosphate serves as cofactor.

The protein localises to the cytoplasm. The enzyme catalyses (6R)-5,10-methylene-5,6,7,8-tetrahydrofolate + glycine + H2O = (6S)-5,6,7,8-tetrahydrofolate + L-serine. The protein operates within one-carbon metabolism; tetrahydrofolate interconversion. It functions in the pathway amino-acid biosynthesis; glycine biosynthesis; glycine from L-serine: step 1/1. Functionally, catalyzes the reversible interconversion of serine and glycine with tetrahydrofolate (THF) serving as the one-carbon carrier. This reaction serves as the major source of one-carbon groups required for the biosynthesis of purines, thymidylate, methionine, and other important biomolecules. Also exhibits THF-independent aldolase activity toward beta-hydroxyamino acids, producing glycine and aldehydes, via a retro-aldol mechanism. This is Serine hydroxymethyltransferase from Ehrlichia ruminantium (strain Gardel).